The chain runs to 158 residues: Snaclec flavocetin-A subunit alpha (158 aa).

An N-terminal signal peptide occupies residues 1 to 23 (MERLIFVSFGLLVVILSLSGTGA). Disulfide bonds link cysteine 27/cysteine 38, cysteine 55/cysteine 152, and cysteine 127/cysteine 144. The 120-residue stretch at 34–153 (YDRYCYQAFS…CGTENPFVCK (120 aa)) folds into the C-type lectin domain.

It belongs to the snaclec family. As to quaternary structure, tetramer of heterodimers of alpha and beta subunits (alphabeta)(4); disulfide-linked. As to expression, expressed by the venom gland.

The protein localises to the secreted. In terms of biological role, strong platelet aggregation inhibitor. Binds specifically to platelet glycoprotein Ibalpha (GP1BA) with high affinity and inhibits vWF-dependent platelet aggregation. Has also been observed to induce small agglutinates in washed platelets by binding to GPIb. The polypeptide is Snaclec flavocetin-A subunit alpha (Protobothrops flavoviridis (Habu)).